We begin with the raw amino-acid sequence, 459 residues long: ERBB receptor feedback inhibitor 1 (459 aa).

S2 bears the N-acetylserine mark. Residues T126 and T130 each carry the phosphothreonine modification. Positions 227-352 are disordered; it reads QNRVVPDPNP…VMPPTQSFAP (126 aa). Residues S250 and S271 each carry the phosphoserine modification. Residues 264-273 show a composition bias toward polar residues; the sequence is SSCTHRASPS. Over residues 282 to 291 the composition is skewed to pro residues; that stretch reads PPRVPIPPRP. Position 300 is a phosphoserine (S300). A compositionally biased stretch (basic and acidic residues) spans 310 to 323; that stretch reads DEDRPPKVPPREPL. Polar residues predominate over residues 324-335; sequence SRSNSRTPSPKS. The tract at residues 332–361 is interaction with EGFR and ERBB2 and regulation of EGFR activation; the sequence is SPKSLPSYLNGVMPPTQSFAPDPKYVSSKA. At S458 the chain carries Phosphoserine.

The protein belongs to the MIG6 family. As to quaternary structure, interacts with EGFR and ERBB2.

It is found in the cytoplasm. The protein resides in the cell membrane. It localises to the nucleus. Functionally, negative regulator of EGFR signaling in skin morphogenesis. Acts as a negative regulator for several EGFR family members, including ERBB2, ERBB3 and ERBB4. Inhibits EGFR catalytic activity by interfering with its dimerization. Inhibits autophosphorylation of EGFR, ERBB2 and ERBB4. Important for normal keratinocyte proliferation and differentiation. Plays a role in modulating the response to steroid hormones in the uterus. Required for normal response to progesterone in the uterus and for fertility. Mediates epithelial estrogen responses in the uterus by regulating ESR1 levels and activation. Important for regulation of endometrium cell proliferation. Important for normal prenatal and perinatal lung development. The chain is ERBB receptor feedback inhibitor 1 (Errfi1) from Rattus norvegicus (Rat).